Reading from the N-terminus, the 500-residue chain is Ribose import ATP-binding protein RbsA (500 aa).

2 ABC transporter domains span residues Leu6–Lys242 and Ala252–Asn495. An ATP-binding site is contributed by Gly38–Ser45.

It belongs to the ABC transporter superfamily. Ribose importer (TC 3.A.1.2.1) family. In terms of assembly, the complex is composed of an ATP-binding protein (RbsA), two transmembrane proteins (RbsC) and a solute-binding protein (RbsB).

Its subcellular location is the cell inner membrane. It catalyses the reaction D-ribose(out) + ATP + H2O = D-ribose(in) + ADP + phosphate + H(+). Its function is as follows. Part of the ABC transporter complex RbsABC involved in ribose import. Responsible for energy coupling to the transport system. The sequence is that of Ribose import ATP-binding protein RbsA from Vibrio cholerae serotype O1 (strain ATCC 39315 / El Tor Inaba N16961).